The primary structure comprises 171 residues: Peptide deformylase (171 aa).

2 residues coordinate Fe cation: Cys94 and His136. The active site involves Glu137. His140 is a Fe cation binding site.

The protein belongs to the polypeptide deformylase family. It depends on Fe(2+) as a cofactor.

It catalyses the reaction N-terminal N-formyl-L-methionyl-[peptide] + H2O = N-terminal L-methionyl-[peptide] + formate. In terms of biological role, removes the formyl group from the N-terminal Met of newly synthesized proteins. Requires at least a dipeptide for an efficient rate of reaction. N-terminal L-methionine is a prerequisite for activity but the enzyme has broad specificity at other positions. This Afipia carboxidovorans (strain ATCC 49405 / DSM 1227 / KCTC 32145 / OM5) (Oligotropha carboxidovorans) protein is Peptide deformylase.